Reading from the N-terminus, the 283-residue chain is MSKNNAVEFRHVSFTYPDTEKPVLNDINFKIRSGSWTALIGHNGSGKSTISKLTNGLLLPDADANSKIIVSGITLNSKTVWNVREKVGIVFQNPDNQFVGATVGDDVAFGLENRGVPRNEMIRIVNRVLSDVGMLDYINAEPANLSGGQKQRVAIAGILAVEPDIIILDESTSMLDPNGRNQILKIIRQLMIDKNLTIISITHDIDEASLADDVIVLNDGKILAQSGPIDIFSKPELLQEIGLDIPFVEKVILKLKETGIKVPQSIKTQDELEQYLCQLNSKK.

An ABC transporter domain is found at 7 to 244 (VEFRHVSFTY…PELLQEIGLD (238 aa)). 41 to 48 (GHNGSGKS) serves as a coordination point for ATP.

It belongs to the ABC transporter superfamily. Energy-coupling factor EcfA family. In terms of assembly, forms a stable energy-coupling factor (ECF) transporter complex composed of 2 membrane-embedded substrate-binding proteins (S component), 2 ATP-binding proteins (A component) and 2 transmembrane proteins (T component).

Its subcellular location is the cell membrane. Its function is as follows. ATP-binding (A) component of a common energy-coupling factor (ECF) ABC-transporter complex. Unlike classic ABC transporters this ECF transporter provides the energy necessary to transport a number of different substrates. This Lactobacillus acidophilus (strain ATCC 700396 / NCK56 / N2 / NCFM) protein is Energy-coupling factor transporter ATP-binding protein EcfA1.